Here is a 340-residue protein sequence, read N- to C-terminus: Dihydroorotate dehydrogenase (quinone) (340 aa).

FMN contacts are provided by residues 61 to 65 and threonine 85; that span reads AGLDK. Lysine 65 contributes to the substrate binding site. 110-114 is a binding site for substrate; that stretch reads NRMGF. FMN is bound by residues asparagine 138 and asparagine 171. Position 171 (asparagine 171) interacts with substrate. The Nucleophile role is filled by serine 174. Asparagine 176 is a binding site for substrate. FMN-binding residues include lysine 216 and threonine 244. Residue 245–246 coordinates substrate; sequence NT. Residues glycine 267, glycine 296, and 317 to 318 contribute to the FMN site; that span reads YS.

It belongs to the dihydroorotate dehydrogenase family. Type 2 subfamily. Monomer. It depends on FMN as a cofactor.

The protein resides in the cell membrane. It catalyses the reaction (S)-dihydroorotate + a quinone = orotate + a quinol. The protein operates within pyrimidine metabolism; UMP biosynthesis via de novo pathway; orotate from (S)-dihydroorotate (quinone route): step 1/1. Functionally, catalyzes the conversion of dihydroorotate to orotate with quinone as electron acceptor. The sequence is that of Dihydroorotate dehydrogenase (quinone) from Pseudomonas putida (strain ATCC 47054 / DSM 6125 / CFBP 8728 / NCIMB 11950 / KT2440).